We begin with the raw amino-acid sequence, 360 residues long: Phenylalanine--tRNA ligase alpha subunit (360 aa).

A Mg(2+)-binding site is contributed by Glu260.

Belongs to the class-II aminoacyl-tRNA synthetase family. Phe-tRNA synthetase alpha subunit type 1 subfamily. As to quaternary structure, tetramer of two alpha and two beta subunits. Mg(2+) is required as a cofactor.

It is found in the cytoplasm. The catalysed reaction is tRNA(Phe) + L-phenylalanine + ATP = L-phenylalanyl-tRNA(Phe) + AMP + diphosphate + H(+). The chain is Phenylalanine--tRNA ligase alpha subunit from Bradyrhizobium sp. (strain BTAi1 / ATCC BAA-1182).